The following is a 365-amino-acid chain: 3-dehydroquinate synthase (365 aa).

NAD(+)-binding positions include 75 to 80 (DAESGK), 109 to 113 (GAATD), 133 to 134 (TT), Lys146, and Lys155. Zn(2+)-binding residues include Glu188, His253, and His269.

Belongs to the sugar phosphate cyclases superfamily. Dehydroquinate synthase family. NAD(+) serves as cofactor. Co(2+) is required as a cofactor. Requires Zn(2+) as cofactor.

It localises to the cytoplasm. The enzyme catalyses 7-phospho-2-dehydro-3-deoxy-D-arabino-heptonate = 3-dehydroquinate + phosphate. The protein operates within metabolic intermediate biosynthesis; chorismate biosynthesis; chorismate from D-erythrose 4-phosphate and phosphoenolpyruvate: step 2/7. In terms of biological role, catalyzes the conversion of 3-deoxy-D-arabino-heptulosonate 7-phosphate (DAHP) to dehydroquinate (DHQ). This is 3-dehydroquinate synthase from Corynebacterium efficiens (strain DSM 44549 / YS-314 / AJ 12310 / JCM 11189 / NBRC 100395).